Here is a 246-residue protein sequence, read N- to C-terminus: Ribonuclease PH (246 aa).

Phosphate-binding positions include Arg-86 and 124–126; that span reads GTR.

The protein belongs to the RNase PH family. In terms of assembly, homohexameric ring arranged as a trimer of dimers.

The catalysed reaction is tRNA(n+1) + phosphate = tRNA(n) + a ribonucleoside 5'-diphosphate. Its function is as follows. Phosphorolytic 3'-5' exoribonuclease that plays an important role in tRNA 3'-end maturation. Removes nucleotide residues following the 3'-CCA terminus of tRNAs; can also add nucleotides to the ends of RNA molecules by using nucleoside diphosphates as substrates, but this may not be physiologically important. Probably plays a role in initiation of 16S rRNA degradation (leading to ribosome degradation) during starvation. This chain is Ribonuclease PH, found in Bacillus licheniformis (strain ATCC 14580 / DSM 13 / JCM 2505 / CCUG 7422 / NBRC 12200 / NCIMB 9375 / NCTC 10341 / NRRL NRS-1264 / Gibson 46).